The following is a 244-amino-acid chain: Protein IN2-1 homolog B (244 aa).

A disordered region spans residues 1-27 (MAAAAAAPASSEKEVLPPSLTSSSEPP). The 82-residue stretch at 32 to 113 (GTTRLYVAYH…YIDTNFEGPA (82 aa)) folds into the GST N-terminal domain. Residues valine 85 and 97-98 (ES) each bind glutathione. The GST C-terminal domain maps to 118-241 (DSEKQQFAEE…FLLEHTKKRL (124 aa)).

This Oryza sativa subsp. indica (Rice) protein is Protein IN2-1 homolog B (GSTZ5).